The sequence spans 527 residues: Homeobox protein NOBOX (527 aa).

4 disordered regions span residues 1–126, 194–245, 271–306, and 488–527; these read MEPT…DLKK, VEKL…DVFP, VTPP…RDVP, and ETGS…GAKE. Positions 136-195 form a DNA-binding region, homeobox; it reads RKKTRTLYRSDQLEELERIFQEDHYPDSDKRHEISQMVGVTPQRIMVWFQNRRAKWRKVE. The span at 194–203 shows a compositional bias: basic and acidic residues; sequence VEKLNEKETK. Polar residues predominate over residues 488 to 506; sequence ETGSSLSKMSDEQTSSSLE. Positions 511–527 are enriched in basic and acidic residues; that stretch reads EEVRDKNKNSHAAGAKE.

Specifically expressed in ovaries and testes. In ovaries, expressed in oocytes from primordial through antral follicles but not in granulosa cells, theca cells and corpora lutea.

Its subcellular location is the nucleus. Its function is as follows. Transcription factor which plays an essential role in postnatal follicle development. Binds preferentially to the DNA sequences 5'-TAATTG-3', 5'-TAGTTG-3' and 5'-TAATTA-3'. Directly regulates the transcription of POU5F1 and GDF9 during early folliculogenesis. This is Homeobox protein NOBOX (Nobox) from Mus musculus (Mouse).